A 295-amino-acid polypeptide reads, in one-letter code: 4-diphosphocytidyl-2-C-methyl-D-erythritol kinase (295 aa).

Residue Lys10 is part of the active site. 97–107 is a binding site for ATP; it reads PIGSGLGGASS. Residue Asp139 is part of the active site.

Belongs to the GHMP kinase family. IspE subfamily. As to quaternary structure, homodimer.

It carries out the reaction 4-CDP-2-C-methyl-D-erythritol + ATP = 4-CDP-2-C-methyl-D-erythritol 2-phosphate + ADP + H(+). Its pathway is isoprenoid biosynthesis; isopentenyl diphosphate biosynthesis via DXP pathway; isopentenyl diphosphate from 1-deoxy-D-xylulose 5-phosphate: step 3/6. In terms of biological role, catalyzes the phosphorylation of the position 2 hydroxy group of 4-diphosphocytidyl-2C-methyl-D-erythritol. The protein is 4-diphosphocytidyl-2-C-methyl-D-erythritol kinase of Blochmanniella pennsylvanica (strain BPEN).